A 575-amino-acid chain; its full sequence is TOX high mobility group box family member 3 (575 aa).

Disordered regions lie at residues 189–258 (LGGA…QKPV) and 516–575 (QQLQ…VSIF). Residues 195–214 (SHTSPSPPASKSATPSPSSS) are compositionally biased toward low complexity. Over residues 222 to 238 (DANRAIGEKRTAPDSGK) the composition is skewed to basic and acidic residues. Residues 239–249 (KPKTPKKKKKK) show a composition bias toward basic residues. Residues 254-322 (PQKPVSAYAL…EYLKALAAYR (69 aa)) constitute a DNA-binding region (HMG box). Low complexity predominate over residues 516–526 (QQLQHMQHQSQ). Over residues 527 to 541 (PSPRQHSPVTSQITS) the composition is skewed to polar residues. The segment covering 548 to 575 (SPQPASQQHQPQIQSQTQTQVLPQVSIF) has biased composition (low complexity).

Homodimer. Interacts (via HGM box) with CITED1 (via C-terminus); the interaction increases estrogen-response element (ERE)-dependent transcription and protection against cell death. Interacts with CREB1 (phosphorylated form). Interacts with CREB1; the interaction is not depolarization dependent. Interacts with CREBBP (via C-terminus).

Its subcellular location is the nucleus. In terms of biological role, transcriptional coactivator of the p300/CBP-mediated transcription complex. Activates transactivation through cAMP response element (CRE) sites. Protects against cell death by inducing antiapoptotic and repressing pro-apoptotic transcripts. Stimulates transcription from the estrogen-responsive or BCL-2 promoters. Required for depolarization-induced transcription activation of the C-FOS promoter in neurons. Associates with chromatin to the estrogen-responsive C3 promoter region. This Mus musculus (Mouse) protein is TOX high mobility group box family member 3 (Tox3).